Reading from the N-terminus, the 178-residue chain is Large ribosomal subunit protein uL6 (178 aa).

It belongs to the universal ribosomal protein uL6 family. Part of the 50S ribosomal subunit.

Its function is as follows. This protein binds to the 23S rRNA, and is important in its secondary structure. It is located near the subunit interface in the base of the L7/L12 stalk, and near the tRNA binding site of the peptidyltransferase center. The sequence is that of Large ribosomal subunit protein uL6 from Campylobacter curvus (strain 525.92).